We begin with the raw amino-acid sequence, 218 residues long: Riboflavin kinase (218 aa).

An N-terminal signal peptide occupies residues 1–19 (MFTWTIYVSLLLVLAGTFL). Mg(2+)-binding residues include Thr-72 and Asn-74. Glu-155 (nucleophile) is an active-site residue.

It belongs to the flavokinase family. The cofactor is Zn(2+). Requires Mg(2+) as cofactor.

It is found in the microsome. It localises to the mitochondrion inner membrane. Its subcellular location is the endoplasmic reticulum. The enzyme catalyses riboflavin + ATP = FMN + ADP + H(+). It functions in the pathway cofactor biosynthesis; FMN biosynthesis; FMN from riboflavin (ATP route): step 1/1. Its function is as follows. Catalyzes the phosphorylation of riboflavin (vitamin B2) to form flavin mononucleotide (FMN) coenzyme. This Saccharomyces cerevisiae (strain ATCC 204508 / S288c) (Baker's yeast) protein is Riboflavin kinase (FMN1).